The sequence spans 603 residues: Cell division control protein 48 homolog B (603 aa).

ATP-binding positions include 63 to 70 and 327 to 334; these read GPPGTGKT and GPPGCSKT.

It belongs to the AAA ATPase family.

Its subcellular location is the nucleus. The protein resides in the cytoplasm. The protein localises to the cytoskeleton. It is found in the phragmoplast. Functionally, probably functions in cell division and growth processes. Interacts with certain SNAREs as part of specialized membrane fusion events where vesicles from the same organelle fuse (homotypic fusion). This chain is Cell division control protein 48 homolog B (CDC48B), found in Arabidopsis thaliana (Mouse-ear cress).